Reading from the N-terminus, the 537-residue chain is Chaperonin GroEL (537 aa).

Residues 29-32, 86-90, G413, and D492 contribute to the ATP site; these read TLGP and DGTTT.

This sequence belongs to the chaperonin (HSP60) family. Forms a cylinder of 14 subunits composed of two heptameric rings stacked back-to-back. Interacts with the co-chaperonin GroES.

The protein resides in the cytoplasm. It catalyses the reaction ATP + H2O + a folded polypeptide = ADP + phosphate + an unfolded polypeptide.. In terms of biological role, together with its co-chaperonin GroES, plays an essential role in assisting protein folding. The GroEL-GroES system forms a nano-cage that allows encapsulation of the non-native substrate proteins and provides a physical environment optimized to promote and accelerate protein folding. This Dehalococcoides mccartyi (strain ATCC BAA-2266 / KCTC 15142 / 195) (Dehalococcoides ethenogenes (strain 195)) protein is Chaperonin GroEL.